The sequence spans 110 residues: Large ribosomal subunit protein uL22 (110 aa).

Belongs to the universal ribosomal protein uL22 family. Part of the 50S ribosomal subunit.

Its function is as follows. This protein binds specifically to 23S rRNA; its binding is stimulated by other ribosomal proteins, e.g. L4, L17, and L20. It is important during the early stages of 50S assembly. It makes multiple contacts with different domains of the 23S rRNA in the assembled 50S subunit and ribosome. In terms of biological role, the globular domain of the protein is located near the polypeptide exit tunnel on the outside of the subunit, while an extended beta-hairpin is found that lines the wall of the exit tunnel in the center of the 70S ribosome. The sequence is that of Large ribosomal subunit protein uL22 from Solidesulfovibrio magneticus (strain ATCC 700980 / DSM 13731 / RS-1) (Desulfovibrio magneticus).